The following is a 394-amino-acid chain: NADH dehydrogenase [ubiquinone] iron-sulfur protein 2 (394 aa).

This sequence belongs to the complex I 49 kDa subunit family. In terms of assembly, complex I is composed of at least 49 different subunits. This is a component of the iron-sulfur (IP) fragment of the enzyme.

The protein localises to the mitochondrion. It catalyses the reaction a ubiquinone + NADH + 5 H(+)(in) = a ubiquinol + NAD(+) + 4 H(+)(out). Functionally, core subunit of the mitochondrial membrane respiratory chain NADH dehydrogenase (Complex I) that is believed to belong to the minimal assembly required for catalysis. Complex I functions in the transfer of electrons from NADH to the respiratory chain. The immediate electron acceptor for the enzyme is believed to be ubiquinone. Component of the iron-sulfur (IP) fragment of the enzyme. In Arabidopsis thaliana (Mouse-ear cress), this protein is NADH dehydrogenase [ubiquinone] iron-sulfur protein 2 (NAD7).